Reading from the N-terminus, the 388-residue chain is Succinate--CoA ligase [ADP-forming] subunit beta (388 aa).

The 236-residue stretch at 9-244 folds into the ATP-grasp domain; that stretch reads KEILRKFGVA…PDEEDPKETQ (236 aa). ATP is bound by residues K46, 53–55, E99, C102, and E107; that span reads GRG. Positions 199 and 213 each coordinate Mg(2+). Substrate-binding positions include N264 and 321–323; that span reads GIM.

This sequence belongs to the succinate/malate CoA ligase beta subunit family. In terms of assembly, heterotetramer of two alpha and two beta subunits. It depends on Mg(2+) as a cofactor.

It catalyses the reaction succinate + ATP + CoA = succinyl-CoA + ADP + phosphate. The catalysed reaction is GTP + succinate + CoA = succinyl-CoA + GDP + phosphate. Its pathway is carbohydrate metabolism; tricarboxylic acid cycle; succinate from succinyl-CoA (ligase route): step 1/1. Succinyl-CoA synthetase functions in the citric acid cycle (TCA), coupling the hydrolysis of succinyl-CoA to the synthesis of either ATP or GTP and thus represents the only step of substrate-level phosphorylation in the TCA. The beta subunit provides nucleotide specificity of the enzyme and binds the substrate succinate, while the binding sites for coenzyme A and phosphate are found in the alpha subunit. The chain is Succinate--CoA ligase [ADP-forming] subunit beta from Anaeromyxobacter dehalogenans (strain 2CP-1 / ATCC BAA-258).